Consider the following 213-residue polypeptide: Thiopurine S-methyltransferase (213 aa).

Positions 10, 45, 66, and 120 each coordinate S-adenosyl-L-methionine.

This sequence belongs to the class I-like SAM-binding methyltransferase superfamily. TPMT family.

It is found in the cytoplasm. It carries out the reaction S-adenosyl-L-methionine + a thiopurine = S-adenosyl-L-homocysteine + a thiopurine S-methylether.. This is Thiopurine S-methyltransferase from Photobacterium profundum (strain SS9).